We begin with the raw amino-acid sequence, 349 residues long: Adenine deaminase (349 aa).

Residues histidine 24, histidine 26, and histidine 204 each contribute to the Zn(2+) site. Glutamate 207 (proton donor) is an active-site residue. Residue aspartate 285 coordinates Zn(2+). Aspartate 286 is a binding site for substrate.

Belongs to the metallo-dependent hydrolases superfamily. Adenosine and AMP deaminases family. Adenine deaminase type 2 subfamily. Zn(2+) is required as a cofactor.

It carries out the reaction adenine + H2O + H(+) = hypoxanthine + NH4(+). Catalyzes the hydrolytic deamination of adenine to hypoxanthine. Plays an important role in the purine salvage pathway and in nitrogen catabolism. This Trichlorobacter lovleyi (strain ATCC BAA-1151 / DSM 17278 / SZ) (Geobacter lovleyi) protein is Adenine deaminase.